A 307-amino-acid chain; its full sequence is Porphobilinogen deaminase (307 aa).

Cysteine 239 bears the S-(dipyrrolylmethanemethyl)cysteine mark.

It belongs to the HMBS family. Monomer. The cofactor is dipyrromethane.

The enzyme catalyses 4 porphobilinogen + H2O = hydroxymethylbilane + 4 NH4(+). It participates in porphyrin-containing compound metabolism; protoporphyrin-IX biosynthesis; coproporphyrinogen-III from 5-aminolevulinate: step 2/4. Its function is as follows. Tetrapolymerization of the monopyrrole PBG into the hydroxymethylbilane pre-uroporphyrinogen in several discrete steps. The chain is Porphobilinogen deaminase from Campylobacter jejuni subsp. jejuni serotype O:6 (strain 81116 / NCTC 11828).